A 497-amino-acid chain; its full sequence is Validamine 7-phosphate valienyltransferase (497 aa).

Asp158 provides a ligand contact to GDP-valienol. A validamine 7-phosphate-binding site is contributed by His182. GDP-valienol contacts are provided by residues Arg290, Lys295, Arg321, 325–326 (NR), 361–362 (ND), and Thr366. Residue 383-386 (DGQN) participates in validamine 7-phosphate binding. Residues 387 to 388 (LS) and Glu391 contribute to the GDP-valienol site.

It belongs to the glycosyltransferase 20 family. Homodimer.

The enzyme catalyses validamine 7-phosphate + GDP-valienol = validoxylamine A 7'-phosphate + GDP + H(+). Its function is as follows. Involved in the biosynthesis of the antifungal agent validamycin A. Catalyzes the condensation between GDP-valienol and validamine 7-phosphate via a nonglycosidic C-N bond formation to yield validoxylamine A 7'-phosphate. In Streptomyces hygroscopicus subsp. limoneus, this protein is Validamine 7-phosphate valienyltransferase.